The following is an 89-amino-acid chain: Small ribosomal subunit protein bS18 (89 aa).

The protein belongs to the bacterial ribosomal protein bS18 family. In terms of assembly, part of the 30S ribosomal subunit. Forms a tight heterodimer with protein bS6.

In terms of biological role, binds as a heterodimer with protein bS6 to the central domain of the 16S rRNA, where it helps stabilize the platform of the 30S subunit. The chain is Small ribosomal subunit protein bS18 from Parabacteroides distasonis (strain ATCC 8503 / DSM 20701 / CIP 104284 / JCM 5825 / NCTC 11152).